The primary structure comprises 1023 residues: Protein FAM13A (1023 aa).

A Rho-GAP domain is found at 43–231 (VSLQELERQG…KILENYNTLF (189 aa)). The interval 269-290 (LERDMPKPPPKTKIPKSRSEGS) is disordered. A Phosphoserine modification is found at serine 345. Disordered stretches follow at residues 381 to 437 (VNNS…SGFN) and 459 to 562 (CAGE…EVPQ). Over residues 384–405 (SGGQSSEDSESGTLSASSATSA) the composition is skewed to low complexity. Composition is skewed to basic and acidic residues over residues 412–427 (SKEQ…KGLI) and 509–524 (SDER…HTQH). A compositionally biased stretch (polar residues) spans 536–549 (PSLSDTKQQRNQDA). Phosphoserine occurs at positions 597 and 617. Disordered stretches follow at residues 628–663 (QYLD…QEDL) and 726–759 (ISEE…KKQE). Residues 666-730 (AQLTRRIQSL…ESKLKISEED (65 aa)) adopt a coiled-coil conformation. Serine 727 is modified (phosphoserine). Residue threonine 732 is modified to Phosphothreonine. A compositionally biased stretch (polar residues) spans 738-748 (RSNTLPKSFGS). A compositionally biased stretch (basic and acidic residues) spans 750–759 (LEKEDEKKQE). The stretch at 946–978 (ASIPELLEHLQEMREEKKRIRKKLRDFEDNFFR) forms a coiled coil.

The protein belongs to the FAM13 family. As to expression, isoform 1 is widely expressed, with highest expression in skeletal muscle, thymus, brain and lung. Isoform 3 is less abundant than isoform 1 and predominantly expressed in kidney, pancreas, liver, lung and thymus.

The chain is Protein FAM13A (FAM13A) from Homo sapiens (Human).